The sequence spans 172 residues: MEYFNVGKIVNTQGLQGEMRVLSVTDFVEERFKKGQVLALFDEKNQFVMDIEIASHRKQKNFDIIKFKGMYHINDIEKYKGFTLKVAEDQLSDLKDGEFYYHEIIGLGVYEGEELIGKIKEILQPGANDVWVVERHGKRDLLLPYIPPVVLEVDLSNQRVQVELMEGLDDED.

The region spanning 96-168 is the PRC barrel domain; sequence DGEFYYHEII…RVQVELMEGL (73 aa).

The protein belongs to the RimM family. As to quaternary structure, binds ribosomal protein uS19.

The protein localises to the cytoplasm. An accessory protein needed during the final step in the assembly of 30S ribosomal subunit, possibly for assembly of the head region. Essential for efficient processing of 16S rRNA. May be needed both before and after RbfA during the maturation of 16S rRNA. It has affinity for free ribosomal 30S subunits but not for 70S ribosomes. This chain is Ribosome maturation factor RimM, found in Streptococcus agalactiae serotype Ia (strain ATCC 27591 / A909 / CDC SS700).